Consider the following 433-residue polypeptide: Protein root UVB sensitive 2, chloroplastic (433 aa).

This sequence belongs to the RUS1 family. Interacts (via the DUF647 domain) with RUS1 (via the DUF647 domain). In terms of tissue distribution, expressed throughout the plant, with a higher expression near the root apical meristem, in the cortex region of the root elongation zone, in lateral roots and emerging lateral roots. Not detected in extreme root apical meristem or root cap.

It localises to the plastid. Functionally, involved in a root UV-B sensing pathway and in the protection against the hypersensitivity to very low-fluence-rate (VLF) UV-B. RSU1 and RUS2 are probably both negative modulators of the same UV-B perception pathway, which when overstimulated in the roots causes a block to postgermination development. Required for polar auxin transport and to maintain the normal levels of PIN proteins in the root. The protein is Protein root UVB sensitive 2, chloroplastic of Arabidopsis thaliana (Mouse-ear cress).